Here is a 62-residue protein sequence, read N- to C-terminus: Ubiquinol-cytochrome c reductase complex 6.7 kDa protein (62 aa).

The Mitochondrial matrix portion of the chain corresponds to 2–25 (TSPAAAGNGLFKFLRPKLRPQSTD). The chain crosses the membrane as a helical span at residues 26-44 (IQAAAGWGVAAVTGALWVI). Residues 45–62 (QPWDFLRKTFIEKQEEEK) are Mitochondrial intermembrane-facing.

Belongs to the UQCR11/QCR10 family. As to quaternary structure, component of the ubiquinol-cytochrome c oxidoreductase (cytochrome b-c1 complex, complex III, CIII), a multisubunit enzyme composed of 3 respiratory subunits cytochrome b, cytochrome c1 and Rieske protein, 2 core protein subunits, and additional low-molecular weight protein subunits. The complex exists as an obligatory dimer and forms supercomplexes (SCs) in the inner mitochondrial membrane with cytochrome c oxidase (complex IV, CIV).

It is found in the mitochondrion inner membrane. In terms of biological role, component of the ubiquinol-cytochrome c oxidoreductase, a multisubunit transmembrane complex that is part of the mitochondrial electron transport chain which drives oxidative phosphorylation. The respiratory chain contains 3 multisubunit complexes succinate dehydrogenase (complex II, CII), ubiquinol-cytochrome c oxidoreductase (cytochrome b-c1 complex, complex III, CIII) and cytochrome c oxidase (complex IV, CIV), that cooperate to transfer electrons derived from NADH and succinate to molecular oxygen, creating an electrochemical gradient over the inner membrane that drives transmembrane transport and the ATP synthase. The cytochrome b-c1 complex catalyzes electron transfer from ubiquinol to cytochrome c, linking this redox reaction to translocation of protons across the mitochondrial inner membrane, with protons being carried across the membrane as hydrogens on the quinol. In the process called Q cycle, 2 protons are consumed from the matrix, 4 protons are released into the intermembrane space and 2 electrons are passed to cytochrome c. QCR10 has a role in CIII assembly and RIP1 stability. This Solanum tuberosum (Potato) protein is Ubiquinol-cytochrome c reductase complex 6.7 kDa protein.